The sequence spans 178 residues: Cytidylate kinase (178 aa).

Residue Gly-7–Thr-15 coordinates ATP.

It belongs to the cytidylate kinase family. Type 2 subfamily.

The protein resides in the cytoplasm. It carries out the reaction CMP + ATP = CDP + ADP. The catalysed reaction is dCMP + ATP = dCDP + ADP. The protein is Cytidylate kinase of Methanococcus aeolicus (strain ATCC BAA-1280 / DSM 17508 / OCM 812 / Nankai-3).